Here is a 491-residue protein sequence, read N- to C-terminus: Synaptotagmin-9 (491 aa).

The Vesicular segment spans residues 1–52; that stretch reads MPGARDALCHQALQLLAELCARGALEHDSCQDFIYHLRDRARPRLRDPDISV. The interval 9–31 is cysteine motif; it reads CHQALQLLAELCARGALEHDSCQ. Residues 53–73 form a helical membrane-spanning segment; it reads SLLTLVVTACGLALFGVSLFV. Over 74 to 491 the chain is Cytoplasmic; it reads SWKLCWVPWR…AHWHSLLEKR (418 aa). The segment covering 91-104 has biased composition (polar residues); sequence SKDNNQEPLNYTDT. Residues 91 to 147 form a disordered region; it reads SKDNNQEPLNYTDTETNEQENSEDFLDPPTPCPDSSMKISHTSPDIPLSTQPGGQDN. A compositionally biased stretch (acidic residues) spans 105–116; that stretch reads ETNEQENSEDFL. Over residues 127–144 the composition is skewed to polar residues; that stretch reads MKISHTSPDIPLSTQPGG. Ser177 is modified (phosphoserine). 2 C2 domains span residues 220-341 and 352-485; these read ACGK…ILWK and DLGE…AHWH. Ca(2+) is bound by residues Asp251, Asp257, Asp309, Phe310, Asp311, Ser314, Asp317, Asp383, Asp389, Asp443, and Asp445.

It belongs to the synaptotagmin family. As to quaternary structure, homodimer; disulfide-linked via the cysteine motif. Can also form heterodimers with SYT3, SYT6, SYT7 and SYT10. It depends on Ca(2+) as a cofactor.

The protein resides in the cytoplasmic vesicle. It localises to the secretory vesicle. Its subcellular location is the synaptic vesicle membrane. In terms of biological role, may be involved in Ca(2+)-dependent exocytosis of secretory vesicles through Ca(2+) and phospholipid binding to the C2 domain or may serve as Ca(2+) sensors in the process of vesicular trafficking and exocytosis. The chain is Synaptotagmin-9 (Syt9) from Rattus norvegicus (Rat).